The following is a 334-amino-acid chain: Holliday junction branch migration complex subunit RuvB (334 aa).

The interval 4-184 is large ATPase domain (RuvB-L); the sequence is ADRLIQPQLQ…FGIPLRLEFY (181 aa). ATP contacts are provided by residues Arg24, Gly65, Lys68, Thr69, Thr70, 131–133, Arg174, Tyr184, and Arg221; that span reads EDY. Thr69 is a binding site for Mg(2+). The interval 185–255 is small ATPAse domain (RuvB-S); it reads NIKDLSTIVT…VADHALDLLD (71 aa). Positions 258 to 334 are head domain (RuvB-H); the sequence is NEGFDYMDRK…YQHFQLIKPE (77 aa). Positions 294, 313, and 318 each coordinate DNA.

Belongs to the RuvB family. Homohexamer. Forms an RuvA(8)-RuvB(12)-Holliday junction (HJ) complex. HJ DNA is sandwiched between 2 RuvA tetramers; dsDNA enters through RuvA and exits via RuvB. An RuvB hexamer assembles on each DNA strand where it exits the tetramer. Each RuvB hexamer is contacted by two RuvA subunits (via domain III) on 2 adjacent RuvB subunits; this complex drives branch migration. In the full resolvosome a probable DNA-RuvA(4)-RuvB(12)-RuvC(2) complex forms which resolves the HJ.

It localises to the cytoplasm. It catalyses the reaction ATP + H2O = ADP + phosphate + H(+). In terms of biological role, the RuvA-RuvB-RuvC complex processes Holliday junction (HJ) DNA during genetic recombination and DNA repair, while the RuvA-RuvB complex plays an important role in the rescue of blocked DNA replication forks via replication fork reversal (RFR). RuvA specifically binds to HJ cruciform DNA, conferring on it an open structure. The RuvB hexamer acts as an ATP-dependent pump, pulling dsDNA into and through the RuvAB complex. RuvB forms 2 homohexamers on either side of HJ DNA bound by 1 or 2 RuvA tetramers; 4 subunits per hexamer contact DNA at a time. Coordinated motions by a converter formed by DNA-disengaged RuvB subunits stimulates ATP hydrolysis and nucleotide exchange. Immobilization of the converter enables RuvB to convert the ATP-contained energy into a lever motion, pulling 2 nucleotides of DNA out of the RuvA tetramer per ATP hydrolyzed, thus driving DNA branch migration. The RuvB motors rotate together with the DNA substrate, which together with the progressing nucleotide cycle form the mechanistic basis for DNA recombination by continuous HJ branch migration. Branch migration allows RuvC to scan DNA until it finds its consensus sequence, where it cleaves and resolves cruciform DNA. The chain is Holliday junction branch migration complex subunit RuvB from Shewanella sp. (strain W3-18-1).